Here is a 285-residue protein sequence, read N- to C-terminus: Acetyl-coenzyme A carboxylase carboxyl transferase subunit beta (285 aa).

The CoA carboxyltransferase N-terminal domain occupies 29–285 (IMTKCPKCKK…ILKIHQEVTK (257 aa)). Residues Cys-33, Cys-36, Cys-52, and Cys-55 each contribute to the Zn(2+) site. The C4-type zinc-finger motif lies at 33–55 (CPKCKKIMYTKELAENLNVCFNC).

The protein belongs to the AccD/PCCB family. As to quaternary structure, acetyl-CoA carboxylase is a heterohexamer composed of biotin carboxyl carrier protein (AccB), biotin carboxylase (AccC) and two subunits each of ACCase subunit alpha (AccA) and ACCase subunit beta (AccD). Requires Zn(2+) as cofactor.

It is found in the cytoplasm. It catalyses the reaction N(6)-carboxybiotinyl-L-lysyl-[protein] + acetyl-CoA = N(6)-biotinyl-L-lysyl-[protein] + malonyl-CoA. Its pathway is lipid metabolism; malonyl-CoA biosynthesis; malonyl-CoA from acetyl-CoA: step 1/1. In terms of biological role, component of the acetyl coenzyme A carboxylase (ACC) complex. Biotin carboxylase (BC) catalyzes the carboxylation of biotin on its carrier protein (BCCP) and then the CO(2) group is transferred by the transcarboxylase to acetyl-CoA to form malonyl-CoA. This chain is Acetyl-coenzyme A carboxylase carboxyl transferase subunit beta, found in Staphylococcus aureus (strain Mu3 / ATCC 700698).